Here is a 297-residue protein sequence, read N- to C-terminus: Probable endonuclease 4 (297 aa).

Residues histidine 69, histidine 110, glutamate 145, aspartate 179, histidine 182, histidine 214, aspartate 227, histidine 229, and glutamate 259 each contribute to the Zn(2+) site.

It belongs to the AP endonuclease 2 family. Zn(2+) serves as cofactor.

The enzyme catalyses Endonucleolytic cleavage to 5'-phosphooligonucleotide end-products.. Its function is as follows. Endonuclease IV plays a role in DNA repair. It cleaves phosphodiester bonds at apurinic or apyrimidinic (AP) sites, generating a 3'-hydroxyl group and a 5'-terminal sugar phosphate. The polypeptide is Probable endonuclease 4 (Bacillus subtilis (strain 168)).